Reading from the N-terminus, the 223-residue chain is MSREALINRITNETKIQIALNLDGGKLELKESIFPNQSIIIDEHHAKQVSGSQYINVQTGIGFLDHMIHALAKHSGWSLIVECIGDLHIDDHHTAEDVGISLGMAFKQALGQIKGVKRFGHGFAPLDEALSRAVVDLSNRPFAVIELGLKREKIGDLSTEMIPHVLESFAGAVGITIHVDCLRGFNDHHRAESAFKALAIAIKEAISKTGKNDIPSTKGVLSK.

Belongs to the imidazoleglycerol-phosphate dehydratase family.

The catalysed reaction is D-erythro-1-(imidazol-4-yl)glycerol 3-phosphate = 3-(imidazol-4-yl)-2-oxopropyl phosphate + H2O. The protein operates within amino-acid biosynthesis; L-histidine biosynthesis; L-histidine from 5-phospho-alpha-D-ribose 1-diphosphate: step 6/9. This is Imidazoleglycerol-phosphate dehydratase (HIS3) from Candida albicans (Yeast).